The following is a 123-amino-acid chain: MIQEQTMLTVADNSGARRVMCIKVLGGSHRRYAGVGDIIKITIKEAIPRGKVKKGDVLKAVVVRTRKGVRRPDGSVIRFDGNACVILNNNSEQPIGTRIFGPVTRELRTEKFMKIISLAPEVL.

The protein belongs to the universal ribosomal protein uL14 family. In terms of assembly, part of the 50S ribosomal subunit. Forms a cluster with proteins L3 and L19. In the 70S ribosome, L14 and L19 interact and together make contacts with the 16S rRNA in bridges B5 and B8.

In terms of biological role, binds to 23S rRNA. Forms part of two intersubunit bridges in the 70S ribosome. The protein is Large ribosomal subunit protein uL14 of Enterobacter sp. (strain 638).